We begin with the raw amino-acid sequence, 290 residues long: 7-methylguanosine phosphate-specific 5'-nucleotidase B (290 aa).

Asp39 functions as the Nucleophile in the catalytic mechanism. Residues Asp39 and Asp41 each contribute to the Mg(2+) site. Residue Asp41 is the Proton donor of the active site. CMP is bound at residue Glu86. Glu86 contacts N(7)-methyl-GMP. Substrate is bound by residues 154–155 (SA) and Lys203. Asp228 contacts Mg(2+).

The protein belongs to the pyrimidine 5'-nucleotidase family. In terms of assembly, monomer.

The protein localises to the cytoplasm. The enzyme catalyses N(7)-methyl-GMP + H2O = N(7)-methylguanosine + phosphate. It carries out the reaction CMP + H2O = cytidine + phosphate. It catalyses the reaction a ribonucleoside 5'-phosphate + H2O = a ribonucleoside + phosphate. Specifically hydrolyzes 7-methylguanosine monophosphate (m(7)GMP) to 7-methylguanosine and inorganic phosphate. The specific activity for m(7)GMP may protect cells against undesired salvage of m(7)GMP and its incorporation into nucleic acids. Also has weak activity for CMP. UMP and purine nucleotides are poor substrates. This is 7-methylguanosine phosphate-specific 5'-nucleotidase B (Nt5c3b-b) from Xenopus laevis (African clawed frog).